A 98-amino-acid polypeptide reads, in one-letter code: Lipolysis-activating peptide 1-beta chain (98 aa).

The N-terminal stretch at 1-22 (MANVQVIFVAYIAVIAFSMVYG) is a signal peptide. Residues 23 to 91 (DDYKPFGEHN…FLKAMEKQCP (69 aa)) enclose the LCN-type CS-alpha/beta domain. Cystine bridges form between cysteine 37–cysteine 60, cysteine 45–cysteine 70, and cysteine 49–cysteine 72.

This sequence belongs to the long (3 C-C) scorpion toxin superfamily. Homodimer; disulfide-linked or monomer (edited version) or heterodimer of an alpha chain (AC B8XH01) and this beta chain (non-edited version). Expressed by the venom gland.

Its subcellular location is the secreted. The homodimer inhibits HMG-CoA reductase (HMGCR) (32% of inhibition produced by 0.6 uM), a glycoprotein involved in the control of cholesterol biosynthesis. The inhibitory effects of bumarsin are seen at much lower concentrations (0.6 uM) than that for statins such as atorvastatin (5 mM) and simvastatin (10 uM). In addition to inhibition of HMG-CoA reductase, this protein lowers cholesterol levels by inducing steroid hormone synthesis via StAR, and by increasing reverse cholesterol transport mediated by the induction of ABCA1 and APOA1. In terms of biological role, the heterodimer non-edited LVP1 induces lipolysis in rat adipocytes. Induction of lipolysis by LVP1 appears to be mediated through the beta-2 adrenergic receptor pathway (ADRB2). Functionally, the monomer edited version, similar to alpha-toxins, may modulate voltage-gated sodium channels (Nav) and may block voltage-gated potassium channels (Kv). The protein is Lipolysis-activating peptide 1-beta chain of Buthus israelis (Israeli scorpion).